A 245-amino-acid chain; its full sequence is 1-(5-phosphoribosyl)-5-[(5-phosphoribosylamino)methylideneamino] imidazole-4-carboxamide isomerase (245 aa).

The active-site Proton acceptor is D10. The active-site Proton donor is D129.

This sequence belongs to the HisA/HisF family.

It localises to the cytoplasm. The enzyme catalyses 1-(5-phospho-beta-D-ribosyl)-5-[(5-phospho-beta-D-ribosylamino)methylideneamino]imidazole-4-carboxamide = 5-[(5-phospho-1-deoxy-D-ribulos-1-ylimino)methylamino]-1-(5-phospho-beta-D-ribosyl)imidazole-4-carboxamide. The protein operates within amino-acid biosynthesis; L-histidine biosynthesis; L-histidine from 5-phospho-alpha-D-ribose 1-diphosphate: step 4/9. The chain is 1-(5-phosphoribosyl)-5-[(5-phosphoribosylamino)methylideneamino] imidazole-4-carboxamide isomerase from Parafrankia sp. (strain EAN1pec).